Here is a 926-residue protein sequence, read N- to C-terminus: Coatomer subunit beta'-2 (926 aa).

9 WD repeats span residues 13 to 52 (QRSE…MAKS), 55 to 94 (VTEL…KVKV), 97 to 136 (AHSD…ACTQ), 140 to 180 (GHSH…PNFT), 183 to 224 (AHQK…CVQT), 227 to 266 (GHTH…LENT), 269 to 309 (YGLE…ASMD), 351 to 390 (TCDL…RSFG), and 461 to 501 (RIDV…SHFD). The disordered stretch occupies residues 847–926 (EEESLENGDM…GTNNEGNPSA (80 aa)). Residues 868 to 887 (NEQRNEDDVAEHVEEHHEEK) show a composition bias toward basic and acidic residues. Residues 888–900 (EAEEEEGIVDGDS) are compositionally biased toward acidic residues. Positions 917 to 926 (GTNNEGNPSA) are enriched in polar residues.

The protein belongs to the WD repeat COPB2 family. In terms of assembly, oligomeric complex that consists of at least the alpha, beta, beta', gamma, delta, epsilon and zeta subunits.

It is found in the cytoplasm. Its subcellular location is the golgi apparatus membrane. It localises to the cytoplasmic vesicle. The protein localises to the COPI-coated vesicle membrane. The coatomer is a cytosolic protein complex that binds to dilysine motifs and reversibly associates with Golgi non-clathrin-coated vesicles, which further mediate biosynthetic protein transport from the ER, via the Golgi up to the trans Golgi network. Coatomer complex is required for budding from Golgi membranes, and is essential for the retrograde Golgi-to-ER transport of dilysine-tagged proteins. The protein is Coatomer subunit beta'-2 of Arabidopsis thaliana (Mouse-ear cress).